The following is a 178-amino-acid chain: Ribosome maturation factor RimP (178 aa).

Belongs to the RimP family.

The protein resides in the cytoplasm. Functionally, required for maturation of 30S ribosomal subunits. The polypeptide is Ribosome maturation factor RimP (Mycobacterium avium (strain 104)).